The sequence spans 702 residues: Antigen peptide transporter 2 (702 aa).

The Lumenal portion of the chain corresponds to 1 to 6 (MALSYL). The helical transmembrane segment at 7-27 (RPWVSLLLADMALLGLLQGSL) threads the bilayer. At 28–56 (GNLLPQGLPGLWIEGTLRLGVLWGLLKVG) the chain is on the cytoplasmic side. Residues 57-77 (ELLGLVGTLLPLLCLATPLFF) traverse the membrane as a helical segment. The Lumenal portion of the chain corresponds to 78-98 (SLRALVGGTASTSVVRVASAS). The chain crosses the membrane as a helical span at residues 99 to 119 (WGWLLAGYGAVALSWAVWAVL). Over 120-147 (SPAGVQEKEPGQENRTLMKRLLKLSRPD) the chain is Cytoplasmic. The chain crosses the membrane as a helical span at residues 148 to 168 (LPFLIAAFFFLVVAVWGETLI). The ABC transmembrane type-1 domain maps to 151–434 (LIAAFFFLVV…LVYMYGDMLS (284 aa)). Residues 169–186 (PRYSGRVIDILGGDFDPD) are Lumenal-facing. The helical transmembrane segment at 187–207 (AFASAIFFMCLFSVGSSFSAG) threads the bilayer. Over 208-265 (CRGGSFLFTMSRINLRIREQLFSSLLRQDLGFFQETKTGELNSRLSSDTSLMSRWLPF) the chain is Cytoplasmic. The chain crosses the membrane as a helical span at residues 266–286 (NANILLRSLVKVVGLYFFMLQ). Over 287–292 (VSPRLT) the chain is Lumenal. Residues 293–313 (FLSLLDLPLTIAAEKVYNPRH) form a helical membrane-spanning segment. A part of the peptide-binding site region spans residues 300–388 (PLTIAAEKVY…RRVMALGMQV (89 aa)). The Cytoplasmic portion of the chain corresponds to 314–373 (QAVLKEIQDAVAKAGQVVREAVGGLQTVRSFGAEEQEVSHYKEALERCRQLWWRRDLEKD). A helical membrane pass occupies residues 374-394 (VYLVIRRVMALGMQVLILNCG). The Lumenal portion of the chain corresponds to 395–407 (VQQILAGEVTRGG). Residues 408–428 (LLSFLLYQEEVGQYVRNLVYM) form a helical membrane-spanning segment. The segment at 413–432 (LYQEEVGQYVRNLVYMYGDM) is part of the peptide-binding site. At 429 to 702 (YGDMLSNVGA…AHLVQQRLEA (274 aa)) the chain is on the cytoplasmic side. An ABC transporter domain is found at 467–701 (VEFQDVSFSY…YAHLVQQRLE (235 aa)). 502–509 (GPNGSGKS) serves as a coordination point for ATP.

It belongs to the ABC transporter superfamily. ABCB family. MHC peptide exporter (TC 3.A.1.209) subfamily. As to quaternary structure, heterodimer of TAP1 and TAP2 (TAP1-TAP2). A component of the peptide loading complex (PLC), interacts via TAPBP with MHCI heterodimer; this interaction mediates peptide-MHCI assembly. The cofactor is Mg(2+).

It is found in the endoplasmic reticulum membrane. It catalyses the reaction a peptide antigen(in) + ATP + H2O = a peptide antigen(out) + ADP + phosphate + H(+). In terms of biological role, ABC transporter associated with antigen processing. In complex with TAP1 mediates unidirectional translocation of peptide antigens from cytosol to endoplasmic reticulum (ER) for loading onto MHC class I (MHCI) molecules. Uses the chemical energy of ATP to export peptides against the concentration gradient. During the transport cycle alternates between 'inward-facing' state with peptide binding site facing the cytosol to 'outward-facing' state with peptide binding site facing the ER lumen. Peptide antigen binding to ATP-loaded TAP1-TAP2 induces a switch to hydrolysis-competent 'outward-facing' conformation ready for peptide loading onto nascent MHCI molecules. Subsequently ATP hydrolysis resets the transporter to the 'inward facing' state for a new cycle. As a component of the peptide loading complex (PLC), acts as a molecular scaffold essential for peptide-MHCI assembly and antigen presentation. The sequence is that of Antigen peptide transporter 2 (Tap2) from Mus musculus (Mouse).